The sequence spans 148 residues: 3-hydroxyacyl-[acyl-carrier-protein] dehydratase FabZ (148 aa).

The active site involves histidine 55.

Belongs to the thioester dehydratase family. FabZ subfamily.

The protein localises to the cytoplasm. The enzyme catalyses a (3R)-hydroxyacyl-[ACP] = a (2E)-enoyl-[ACP] + H2O. Involved in unsaturated fatty acids biosynthesis. Catalyzes the dehydration of short chain beta-hydroxyacyl-ACPs and long chain saturated and unsaturated beta-hydroxyacyl-ACPs. The polypeptide is 3-hydroxyacyl-[acyl-carrier-protein] dehydratase FabZ (Haemophilus influenzae (strain 86-028NP)).